Consider the following 332-residue polypeptide: NADH-quinone oxidoreductase subunit H (332 aa).

Transmembrane regions (helical) follow at residues threonine 11 to leucine 31, valine 77 to isoleucine 97, valine 110 to glycine 130, isoleucine 156 to isoleucine 176, leucine 182 to glutamate 202, asparagine 240 to isoleucine 260, isoleucine 268 to valine 288, and isoleucine 307 to asparagine 327.

It belongs to the complex I subunit 1 family. In terms of assembly, NDH-1 is composed of 14 different subunits. Subunits NuoA, H, J, K, L, M, N constitute the membrane sector of the complex.

It is found in the cell inner membrane. The catalysed reaction is a quinone + NADH + 5 H(+)(in) = a quinol + NAD(+) + 4 H(+)(out). Functionally, NDH-1 shuttles electrons from NADH, via FMN and iron-sulfur (Fe-S) centers, to quinones in the respiratory chain. The immediate electron acceptor for the enzyme in this species is believed to be ubiquinone. Couples the redox reaction to proton translocation (for every two electrons transferred, four hydrogen ions are translocated across the cytoplasmic membrane), and thus conserves the redox energy in a proton gradient. This subunit may bind ubiquinone. This chain is NADH-quinone oxidoreductase subunit H, found in Pelagibacter ubique (strain HTCC1062).